We begin with the raw amino-acid sequence, 352 residues long: Methylthioribose-1-phosphate isomerase (352 aa).

Substrate contacts are provided by residues R55–A57, R98, and Q201. The active-site Proton donor is D242. Position 252-253 (N252–K253) interacts with substrate.

This sequence belongs to the eIF-2B alpha/beta/delta subunits family. MtnA subfamily.

The catalysed reaction is 5-(methylsulfanyl)-alpha-D-ribose 1-phosphate = 5-(methylsulfanyl)-D-ribulose 1-phosphate. The protein operates within amino-acid biosynthesis; L-methionine biosynthesis via salvage pathway; L-methionine from S-methyl-5-thio-alpha-D-ribose 1-phosphate: step 1/6. Its function is as follows. Catalyzes the interconversion of methylthioribose-1-phosphate (MTR-1-P) into methylthioribulose-1-phosphate (MTRu-1-P). The chain is Methylthioribose-1-phosphate isomerase from Methylococcus capsulatus (strain ATCC 33009 / NCIMB 11132 / Bath).